We begin with the raw amino-acid sequence, 468 residues long: 3-isopropylmalate dehydratase large subunit (468 aa).

Residues Cys-347, Cys-408, and Cys-411 each coordinate [4Fe-4S] cluster.

The protein belongs to the aconitase/IPM isomerase family. LeuC type 1 subfamily. Heterodimer of LeuC and LeuD. Requires [4Fe-4S] cluster as cofactor.

It carries out the reaction (2R,3S)-3-isopropylmalate = (2S)-2-isopropylmalate. It participates in amino-acid biosynthesis; L-leucine biosynthesis; L-leucine from 3-methyl-2-oxobutanoate: step 2/4. Catalyzes the isomerization between 2-isopropylmalate and 3-isopropylmalate, via the formation of 2-isopropylmaleate. This Janthinobacterium sp. (strain Marseille) (Minibacterium massiliensis) protein is 3-isopropylmalate dehydratase large subunit.